We begin with the raw amino-acid sequence, 587 residues long: Protein FRIGIDA-ESSENTIAL 1 (587 aa).

A C3H1-type zinc finger spans residues 96-123; sequence KRAALPCKFFAKGWCFNGVSCKFLHVKE. Disordered regions lie at residues 264 to 346, 368 to 421, and 467 to 492; these read DMGS…SFTI, GDRP…HQET, and IKPA…SDEI. Over residues 294–304 the composition is skewed to low complexity; the sequence is NGNSLSGSGSL. Over residues 470–479 the composition is skewed to basic and acidic residues; sequence AGHDSWHRSD.

In terms of assembly, component of the transcription activator complex FRI-C composed of FRI, FRL1, SUF4, FLX and FES1. Interacts with FLX, (via C-terminus) with FRI (via C-terminus), and with RIN1, a component of the SWR1 chromatin-remodeling complex. As to expression, expressed in root and shoot apices and vasculature.

It is found in the nucleus. Transcriptional activator involved in the FRIGIDA-mediated vernalization pathway, but not in the autonomous flowering pathway. Acts cooperatively with FRI (FRIGIDA) or FRL1 (FRIGIDA-LIKE 1) to promote FLC (FLOWERING LOCUS C) expression. Required for the stabilization of the FRI-C complex. The sequence is that of Protein FRIGIDA-ESSENTIAL 1 (FES1) from Arabidopsis thaliana (Mouse-ear cress).